Here is a 189-residue protein sequence, read N- to C-terminus: ATP synthase subunit delta (189 aa).

Belongs to the ATPase delta chain family. F-type ATPases have 2 components, F(1) - the catalytic core - and F(0) - the membrane proton channel. F(1) has five subunits: alpha(3), beta(3), gamma(1), delta(1), epsilon(1). F(0) has three main subunits: a(1), b(2) and c(10-14). The alpha and beta chains form an alternating ring which encloses part of the gamma chain. F(1) is attached to F(0) by a central stalk formed by the gamma and epsilon chains, while a peripheral stalk is formed by the delta and b chains.

Its subcellular location is the cell inner membrane. In terms of biological role, f(1)F(0) ATP synthase produces ATP from ADP in the presence of a proton or sodium gradient. F-type ATPases consist of two structural domains, F(1) containing the extramembraneous catalytic core and F(0) containing the membrane proton channel, linked together by a central stalk and a peripheral stalk. During catalysis, ATP synthesis in the catalytic domain of F(1) is coupled via a rotary mechanism of the central stalk subunits to proton translocation. Its function is as follows. This protein is part of the stalk that links CF(0) to CF(1). It either transmits conformational changes from CF(0) to CF(1) or is implicated in proton conduction. This chain is ATP synthase subunit delta, found in Ehrlichia ruminantium (strain Gardel).